We begin with the raw amino-acid sequence, 941 residues long: MSSEFLAELHWEDGFAIPVANEENKLLEDQLSKLKDERASLQDELREYEERINSMTSHFKNVKQELSITQSLCKARERETESEEHFKAIAQRELGRVKDEIQRLENEMASILEKKSDKENGIFKATQKLDGLKCQMNWDQQALEAWLEESAHKDSDALTLQKYAQQDDNKIRALTLQLERLTLECNQKRKILDNELTETISAQLELDKAAQDFRKIHNERQELIKQWENTIEQMQKRDGDIDNCALELARIKQETREKENLVKEKIKFLESEIGNNTEFEKRISVADRKLLKCRTAYQDHETSRIQLKGELDSLKATVNRTSSDLEALRKNISKIKKDIHEETARLQKTKNHNEIIQTKLKEITEKTMSVEEKATNLEDMLKEEEKDVKEVDVQLNLIKGVLFKKAQELQTETMKEKAVLSEIEGTRSSLKHLNHQLQKLDFETLKQQEIMYSQDFHIQQVERRMSRLKGEINSEEKQALEAKIVELRKSLEEKKSTCGLLETQIKKLHNDLYFIKKAHSKNSDEKQSLMTKINELNLFIDRSEKELDKAKGFKQDLMIEDNLLKLEVKRTREMLHSKAEEVLSLEKRKQQLYTAMEERTEEIKVHKTMLASQIRYVDQERENISTEFRERLSKIEKLKNRYEILTVVMLPPEGEEEKTQAYYVIKAAQEKEELQREGDCLDAKINKAEKEIYALENTLQVLNSCNNNYKQSFKKVTPSSDEYELKIQLEEQKRAVDEKYRYKQRQIRELQEDIQSMENTLDVIEHLANNVKEKLSEKQAYSFQLSKETEEQKPKLERVTKQCAKLTKEIRLLKDTKDETMEEQDIKLREMKQFHKVIDEMLVDIIEENTEIRIILQTYFQQSGLELPTASTKGSRQSSRSPSHTSLSARSSRSTSTSTSQSSIKVLELKFPASSSLVGSPSRPSSASSSSSNVKSKKSSK.

Coiled coils occupy residues 16–122 (AIPV…ENGI), 164–273 (AQQD…ESEI), 306–605 (QLKG…EIKV), and 665–825 (IKAA…EEQD). The segment at 868-941 (PTASTKGSRQ…SNVKSKKSSK (74 aa)) is disordered. 2 stretches are compositionally biased toward low complexity: residues 871 to 903 (STKG…SQSS) and 914 to 934 (SSSL…SSNV). Phosphoserine is present on residues S892 and S900.

This sequence belongs to the CCDC39 family. Mainly expressed in nasal brushings and, to a lesser extent, in lungs and testis.

It localises to the cytoplasm. The protein localises to the cytoskeleton. Its subcellular location is the cilium axoneme. Required for assembly of dynein regulatory complex (DRC) and inner dynein arm (IDA) complexes, which are responsible for ciliary beat regulation, thereby playing a central role in motility in cilia and flagella. Probably acts together with CCDC40 to form a molecular ruler that determines the 96 nanometer (nm) repeat length and arrangements of components in cilia and flagella. Not required for outer dynein arm complexes assembly. This Homo sapiens (Human) protein is Coiled-coil domain-containing protein 39.